A 165-amino-acid chain; its full sequence is Large ribosomal subunit protein uL10 (165 aa).

It belongs to the universal ribosomal protein uL10 family. Part of the ribosomal stalk of the 50S ribosomal subunit. The N-terminus interacts with L11 and the large rRNA to form the base of the stalk. The C-terminus forms an elongated spine to which L12 dimers bind in a sequential fashion forming a multimeric L10(L12)X complex.

Forms part of the ribosomal stalk, playing a central role in the interaction of the ribosome with GTP-bound translation factors. The polypeptide is Large ribosomal subunit protein uL10 (Buchnera aphidicola subsp. Schizaphis graminum (strain Sg)).